A 166-amino-acid polypeptide reads, in one-letter code: Large ribosomal subunit protein uL10 (166 aa).

This sequence belongs to the universal ribosomal protein uL10 family. Part of the ribosomal stalk of the 50S ribosomal subunit. The N-terminus interacts with L11 and the large rRNA to form the base of the stalk. The C-terminus forms an elongated spine to which L12 dimers bind in a sequential fashion forming a multimeric L10(L12)X complex.

In terms of biological role, forms part of the ribosomal stalk, playing a central role in the interaction of the ribosome with GTP-bound translation factors. This Shouchella clausii (strain KSM-K16) (Alkalihalobacillus clausii) protein is Large ribosomal subunit protein uL10.